A 343-amino-acid polypeptide reads, in one-letter code: Nuclear distribution protein nudE-like 1 (343 aa).

Residues 25 to 190 (KYKQSFQEAR…LAVRERQQEV (166 aa)) adopt a coiled-coil conformation. Disordered stretches follow at residues 184 to 204 (RERQ…LDCE) and 322 to 343 (QGTP…PLSV).

It belongs to the nudE family. Post-translationally, phosphorylated in mitosis.

Its subcellular location is the cytoplasm. It localises to the cytoskeleton. It is found in the microtubule organizing center. The protein resides in the centrosome. The protein localises to the spindle. In terms of biological role, required for organization of the cellular microtubule array and microtubule anchoring at the centrosome. Positively regulates the activity of the minus-end directed microtubule motor protein dynein. May enhance dynein-mediated microtubule sliding by targeting dynein to the microtubule plus end. Positively regulates lysosome peripheral distribution and ruffled border formation in osteoclasts. The chain is Nuclear distribution protein nudE-like 1 (NDEL1) from Gallus gallus (Chicken).